Reading from the N-terminus, the 496-residue chain is ATP synthase subunit beta, chloroplastic (496 aa).

170–177 (GGAGVGKT) provides a ligand contact to ATP.

Belongs to the ATPase alpha/beta chains family. F-type ATPases have 2 components, CF(1) - the catalytic core - and CF(0) - the membrane proton channel. CF(1) has five subunits: alpha(3), beta(3), gamma(1), delta(1), epsilon(1). CF(0) has four main subunits: a(1), b(1), b'(1) and c(9-12).

It localises to the plastid. It is found in the chloroplast thylakoid membrane. It carries out the reaction ATP + H2O + 4 H(+)(in) = ADP + phosphate + 5 H(+)(out). Its function is as follows. Produces ATP from ADP in the presence of a proton gradient across the membrane. The catalytic sites are hosted primarily by the beta subunits. The protein is ATP synthase subunit beta, chloroplastic of Dioscorea elephantipes (Elephant's foot yam).